We begin with the raw amino-acid sequence, 153 residues long: Cytochrome c-type biogenesis protein CcmE (153 aa).

Over 1-7 the chain is Cytoplasmic; it reads MKPRHKR. A helical; Signal-anchor for type II membrane protein transmembrane segment spans residues 8–28; sequence LAIAGGVLVAVGAIATLVLNA. Topologically, residues 29–153 are periplasmic; the sequence is FQSNLVFFYS…SSQAATGDPR (125 aa). Residues His-120 and Tyr-124 each coordinate heme. The interval 130-153 is disordered; it reads AEALKRAKEGGQMQSSQAATGDPR. A compositionally biased stretch (polar residues) spans 141–153; it reads QMQSSQAATGDPR.

This sequence belongs to the CcmE/CycJ family.

The protein localises to the cell inner membrane. In terms of biological role, heme chaperone required for the biogenesis of c-type cytochromes. Transiently binds heme delivered by CcmC and transfers the heme to apo-cytochromes in a process facilitated by CcmF and CcmH. The chain is Cytochrome c-type biogenesis protein CcmE from Leptothrix cholodnii (strain ATCC 51168 / LMG 8142 / SP-6) (Leptothrix discophora (strain SP-6)).